The sequence spans 485 residues: Programmed cell death protein 7 (485 aa).

The tract at residues 1–133 is disordered; sequence MALPPFFGQG…EAPPPPADVL (133 aa). Residues 12–48 are compositionally biased toward pro residues; it reads PGPPPPQPPPPAPFGCPPPPLPSPAFPPPLPQRPGPF. Positions 49-71 are enriched in low complexity; it reads PGASAPFLQPPLALQPRASAEAS. 2 stretches are compositionally biased toward pro residues: residues 82–96 and 109–130; these read PVPPPPLPPPPPQCR and PPPPGPGPPWSPRWPEAPPPPA. 2 coiled-coil regions span residues 232–335 and 362–411; these read VGEA…AAAR and RSEL…ESKL.

Interacts with RBM40. Component of the U11/U12 snRNPs that are part of the U12-type spliceosome.

The protein resides in the nucleus. Promotes apoptosis when overexpressed. This Homo sapiens (Human) protein is Programmed cell death protein 7 (PDCD7).